A 497-amino-acid polypeptide reads, in one-letter code: Glycerol kinase (497 aa).

Residue Thr12 coordinates ADP. Positions 12, 13, and 14 each coordinate ATP. Residue Thr12 coordinates sn-glycerol 3-phosphate. Arg16 lines the ADP pocket. Residues Arg82, Glu83, Tyr134, and Asp243 each coordinate sn-glycerol 3-phosphate. Arg82, Glu83, Tyr134, Asp243, and Gln244 together coordinate glycerol. The ADP site is built by Thr265 and Gly308. Thr265, Gly308, Gln312, and Gly409 together coordinate ATP. Residues Gly409 and Asn413 each coordinate ADP.

This sequence belongs to the FGGY kinase family.

The enzyme catalyses glycerol + ATP = sn-glycerol 3-phosphate + ADP + H(+). The protein operates within polyol metabolism; glycerol degradation via glycerol kinase pathway; sn-glycerol 3-phosphate from glycerol: step 1/1. With respect to regulation, inhibited by fructose 1,6-bisphosphate (FBP). Key enzyme in the regulation of glycerol uptake and metabolism. Catalyzes the phosphorylation of glycerol to yield sn-glycerol 3-phosphate. The chain is Glycerol kinase from Nitratidesulfovibrio vulgaris (strain DSM 19637 / Miyazaki F) (Desulfovibrio vulgaris).